Here is a 274-residue protein sequence, read N- to C-terminus: MRKVLVFLKNSKKAFETFKRVERVLKDLNLSYKKFINRKELFKVLKPKDYELFLVIGGDGTFLSAARIASRFGVPLVGVNEGRFGFLTEIKKEEIKKVLPLVLEGRAKLQERLMIDVYLRSRNRLRYLGNYLNDAVISKSSIARIIRTKVFINGEEVLEVFGDGVILSTPTGSTAYALSAGGPIVYPESQNLLFVPICPHTLSNRPLVLPSKFEVKFKVVSENMEAFLTLDGQEGFHLKKGDEVIVKRSRYVCRMYSHPRKSFFGILKEKLRWG.

Aspartate 59 acts as the Proton acceptor in catalysis. Residues 59 to 60, 133 to 134, arginine 144, aspartate 163, 174 to 179, and glutamine 233 contribute to the NAD(+) site; these read DG, ND, and TAYALS.

Belongs to the NAD kinase family. A divalent metal cation serves as cofactor.

The protein resides in the cytoplasm. It carries out the reaction NAD(+) + ATP = ADP + NADP(+) + H(+). Functionally, involved in the regulation of the intracellular balance of NAD and NADP, and is a key enzyme in the biosynthesis of NADP. Catalyzes specifically the phosphorylation on 2'-hydroxyl of the adenosine moiety of NAD to yield NADP. The chain is NAD kinase from Aquifex aeolicus (strain VF5).